Consider the following 167-residue polypeptide: Dihydrofolate reductase (167 aa).

In terms of domain architecture, DHFR spans 1-162 (MFISMWAQDK…YPHRFQKWQK (162 aa)). Residues alanine 7 and 13–19 (LIGKDGL) each bind NADP(+). Aspartate 27 serves as a coordination point for substrate. An NADP(+)-binding site is contributed by 45-46 (KT). Arginine 58 provides a ligand contact to substrate. NADP(+) is bound by residues 64–65 (TT) and 99–106 (GGSRIFQA). Residue threonine 117 participates in substrate binding.

It belongs to the dihydrofolate reductase family.

The catalysed reaction is (6S)-5,6,7,8-tetrahydrofolate + NADP(+) = 7,8-dihydrofolate + NADPH + H(+). Its pathway is cofactor biosynthesis; tetrahydrofolate biosynthesis; 5,6,7,8-tetrahydrofolate from 7,8-dihydrofolate: step 1/1. Key enzyme in folate metabolism. Catalyzes an essential reaction for de novo glycine and purine synthesis, and for DNA precursor synthesis. The polypeptide is Dihydrofolate reductase (folA) (Enterococcus faecium (Streptococcus faecium)).